A 259-amino-acid chain; its full sequence is Type III pantothenate kinase (259 aa).

6–13 serves as a coordination point for ATP; that stretch reads DCGNTNTL. 108–111 provides a ligand contact to substrate; that stretch reads GADR. Aspartate 110 serves as the catalytic Proton acceptor. Aspartate 130 is a K(+) binding site. Threonine 133 is an ATP binding site. Threonine 185 lines the substrate pocket.

The protein belongs to the type III pantothenate kinase family. As to quaternary structure, homodimer. Requires NH4(+) as cofactor. It depends on K(+) as a cofactor.

It is found in the cytoplasm. The enzyme catalyses (R)-pantothenate + ATP = (R)-4'-phosphopantothenate + ADP + H(+). It participates in cofactor biosynthesis; coenzyme A biosynthesis; CoA from (R)-pantothenate: step 1/5. Its function is as follows. Catalyzes the phosphorylation of pantothenate (Pan), the first step in CoA biosynthesis. In Maricaulis maris (strain MCS10) (Caulobacter maris), this protein is Type III pantothenate kinase.